A 240-amino-acid polypeptide reads, in one-letter code: Ribosomal RNA small subunit methyltransferase G (240 aa).

Residues Gly79, Phe84, 130-131 (AE), and Arg149 each bind S-adenosyl-L-methionine.

It belongs to the methyltransferase superfamily. RNA methyltransferase RsmG family.

Its subcellular location is the cytoplasm. Functionally, specifically methylates the N7 position of a guanine in 16S rRNA. This chain is Ribosomal RNA small subunit methyltransferase G, found in Lactobacillus helveticus (strain DPC 4571).